Here is a 550-residue protein sequence, read N- to C-terminus: Carnitine transporter (550 aa).

Transmembrane regions (helical) follow at residues 15–35 (FLAV…AIYS), 53–73 (FTTP…GLAF), 92–112 (SWIF…WGFL), 137–157 (VAYS…LASI), 196–216 (MFLL…AVTF), 230–250 (FMTK…SSYV), 263–283 (VCLG…TQFI), 317–337 (WTVF…LFVT), 347–367 (EVIF…FGVF), 401–421 (LLPA…VFLA), 451–471 (LFWC…KAPL), and 477–497 (ATIV…YGLV).

Belongs to the BCCT transporter (TC 2.A.15) family.

The protein localises to the cell inner membrane. Its activity is regulated as follows. Inhibited by the protonophore 3,3',4',5-tetrachlorosalicylanilide (TCS). Not activated by osmolarity. In terms of biological role, catalyzes the energy-dependent uptake of carnitine and is essential for growth on carnitine. Can also mediate the uptake of choline. Is probably a proton:substrate symporter. In Acinetobacter baumannii (strain ATCC 19606 / DSM 30007 / JCM 6841 / CCUG 19606 / CIP 70.34 / NBRC 109757 / NCIMB 12457 / NCTC 12156 / 81), this protein is Carnitine transporter.